Reading from the N-terminus, the 698-residue chain is Serine/threonine-protein kinase Nek8 (698 aa).

Residues 4-258 (YERIRVVGRG…LSHIMAQPLC (255 aa)) enclose the Protein kinase domain. ATP-binding positions include 10–18 (VGRGAFGIV) and Lys-33. The active-site Proton acceptor is the Asp-128. Phosphothreonine; by autocatalysis is present on Thr-162. Positions 281–307 (LTPGTPMAPGSTGSRATSARCRGVPRG) are disordered. RCC1 repeat units follow at residues 415 to 466 (RGII…ALSA), 467 to 518 (DGEL…ILTS), 520 to 571 (GRVL…TLLC), 585 to 636 (SGAC…AIGA), and 638 to 689 (GEVY…LAVR).

The protein belongs to the protein kinase superfamily. NEK Ser/Thr protein kinase family. NIMA subfamily. In terms of assembly, interacts with PKD2; may regulate PKD2 targeting to the cilium. Interacts with ANKS6. Component of a complex containing at least ANKS6, INVS, NEK8 and NPHP3. ANKS6 may organize complex assembly by linking INVS and NPHP3 to NEK8 and INVS may target it to the proximal ciliary axoneme. Interacts with ANKS3. The cofactor is Mg(2+).

Its subcellular location is the cytoplasm. It is found in the cytoskeleton. The protein localises to the cell projection. The protein resides in the cilium. It localises to the cilium axoneme. Its subcellular location is the microtubule organizing center. It is found in the centrosome. The catalysed reaction is L-seryl-[protein] + ATP = O-phospho-L-seryl-[protein] + ADP + H(+). It catalyses the reaction L-threonyl-[protein] + ATP = O-phospho-L-threonyl-[protein] + ADP + H(+). Required for renal tubular integrity. May regulate local cytoskeletal structure in kidney tubule epithelial cells. May regulate ciliary biogenesis through targeting of proteins to the cilia. Plays a role in organogenesis and is involved in the regulation of the Hippo signaling pathway. This is Serine/threonine-protein kinase Nek8 (Nek8) from Rattus norvegicus (Rat).